The sequence spans 207 residues: LexA repressor (207 aa).

A DNA-binding region (H-T-H motif) is located at residues 28–48; it reads RAEISRELGFKSANAAEEHLK. Residues Ser-123 and Lys-160 each act as for autocatalytic cleavage activity in the active site.

It belongs to the peptidase S24 family. In terms of assembly, homodimer.

It catalyses the reaction Hydrolysis of Ala-|-Gly bond in repressor LexA.. In terms of biological role, represses a number of genes involved in the response to DNA damage (SOS response), including recA and lexA. In the presence of single-stranded DNA, RecA interacts with LexA causing an autocatalytic cleavage which disrupts the DNA-binding part of LexA, leading to derepression of the SOS regulon and eventually DNA repair. The chain is LexA repressor from Haemophilus influenzae (strain ATCC 51907 / DSM 11121 / KW20 / Rd).